Here is a 317-residue protein sequence, read N- to C-terminus: Acetyl-coenzyme A carboxylase carboxyl transferase subunit alpha (317 aa).

The CoA carboxyltransferase C-terminal domain occupies 31-292; the sequence is RFEPELAQLE…DKALWATLTS (262 aa).

Belongs to the AccA family. As to quaternary structure, acetyl-CoA carboxylase is a heterohexamer composed of biotin carboxyl carrier protein (AccB), biotin carboxylase (AccC) and two subunits each of ACCase subunit alpha (AccA) and ACCase subunit beta (AccD).

It localises to the cytoplasm. The enzyme catalyses N(6)-carboxybiotinyl-L-lysyl-[protein] + acetyl-CoA = N(6)-biotinyl-L-lysyl-[protein] + malonyl-CoA. Its pathway is lipid metabolism; malonyl-CoA biosynthesis; malonyl-CoA from acetyl-CoA: step 1/1. In terms of biological role, component of the acetyl coenzyme A carboxylase (ACC) complex. First, biotin carboxylase catalyzes the carboxylation of biotin on its carrier protein (BCCP) and then the CO(2) group is transferred by the carboxyltransferase to acetyl-CoA to form malonyl-CoA. In Sorangium cellulosum (strain So ce56) (Polyangium cellulosum (strain So ce56)), this protein is Acetyl-coenzyme A carboxylase carboxyl transferase subunit alpha.